Here is a 293-residue protein sequence, read N- to C-terminus: 16S rRNA (guanine(1405)-N(7))-methyltransferase (293 aa).

S-adenosyl-L-methionine contacts are provided by residues phenylalanine 47, histidine 80–serine 82, arginine 86, alanine 111, aspartate 134, aspartate 160–leucine 161, leucine 176, and glutamine 185. A compositionally biased stretch (low complexity) spans glycine 258–proline 274. Residues glycine 258–glycine 293 form a disordered region. Residues proline 284 to glycine 293 show a composition bias toward basic and acidic residues.

It belongs to the methyltransferase superfamily. Aminoglycoside resistance family.

The catalysed reaction is guanosine(1405) in 16S rRNA + S-adenosyl-L-methionine = N(7)-methylguanosine(1405) in 16S rRNA + S-adenosyl-L-homocysteine. Specifically methylates the N(7) position of guanine 1405 in 16S rRNA. Confers resistance to aminoglycosides. This chain is 16S rRNA (guanine(1405)-N(7))-methyltransferase (fmrO), found in Micromonospora olivasterospora.